The chain runs to 140 residues: Large ribosomal subunit protein uL11 (140 aa).

It belongs to the universal ribosomal protein uL11 family. Part of the ribosomal stalk of the 50S ribosomal subunit. Interacts with L10 and the large rRNA to form the base of the stalk. L10 forms an elongated spine to which L12 dimers bind in a sequential fashion forming a multimeric L10(L12)X complex. In terms of processing, one or more lysine residues are methylated.

In terms of biological role, forms part of the ribosomal stalk which helps the ribosome interact with GTP-bound translation factors. This chain is Large ribosomal subunit protein uL11, found in Karelsulcia muelleri (strain GWSS) (Sulcia muelleri).